A 155-amino-acid chain; its full sequence is 2-C-methyl-D-erythritol 2,4-cyclodiphosphate synthase (155 aa).

Residues Asp-8 and His-10 each contribute to the a divalent metal cation site. 4-CDP-2-C-methyl-D-erythritol 2-phosphate is bound by residues 8-10 (DVH) and 34-35 (HS). His-42 is a binding site for a divalent metal cation. 4-CDP-2-C-methyl-D-erythritol 2-phosphate is bound by residues 56-58 (DIG), 61-65 (FPDSD), 100-106 (AQKPKML), 132-135 (TTEE), Phe-139, and Lys-142.

It belongs to the IspF family. As to quaternary structure, homotrimer. Requires a divalent metal cation as cofactor.

The enzyme catalyses 4-CDP-2-C-methyl-D-erythritol 2-phosphate = 2-C-methyl-D-erythritol 2,4-cyclic diphosphate + CMP. It functions in the pathway isoprenoid biosynthesis; isopentenyl diphosphate biosynthesis via DXP pathway; isopentenyl diphosphate from 1-deoxy-D-xylulose 5-phosphate: step 4/6. Its function is as follows. Involved in the biosynthesis of isopentenyl diphosphate (IPP) and dimethylallyl diphosphate (DMAPP), two major building blocks of isoprenoid compounds. Catalyzes the conversion of 4-diphosphocytidyl-2-C-methyl-D-erythritol 2-phosphate (CDP-ME2P) to 2-C-methyl-D-erythritol 2,4-cyclodiphosphate (ME-CPP) with a corresponding release of cytidine 5-monophosphate (CMP). In Clostridium botulinum (strain Kyoto / Type A2), this protein is 2-C-methyl-D-erythritol 2,4-cyclodiphosphate synthase.